The sequence spans 98 residues: Putative zinc finger protein ORF98b (98 aa).

The segment at 54–77 adopts a C2H2-type zinc-finger fold; that stretch reads GFCPYCHNHYRTFGILANHIMRSH.

In Acidianus convivator (ATV), this protein is Putative zinc finger protein ORF98b.